An 894-amino-acid chain; its full sequence is Glutamate receptor 3 (894 aa).

Positions 1–28 (MARQKKMGQSVLRAVFFLVLGLLGHSHG) are cleaved as a signal peptide. Topologically, residues 29–552 (GFPNTISIGG…GVFSFLDPLA (524 aa)) are extracellular. Asn63, Asn266, Asn380, Asn415, and Asn422 each carry an N-linked (GlcNAc...) asparagine glycan. A disulfide bridge links Cys91 with Cys340. Positions 508, 510, and 515 each coordinate L-glutamate. The chain crosses the membrane as a helical span at residues 553 to 573 (YEIWMCIVFAYIGVSVVLFLV). The Cytoplasmic portion of the chain corresponds to 574–602 (SRFSPYEWHLEDNNEEPRDPQSPPDPPNE). Residues 603–618 (FGIFNSLWFSLGAFMQ) constitute an intramembrane region (helical; Pore-forming). The stretch at 619-621 (QGC) is an intramembrane region. Cys621 carries S-palmitoyl cysteine lipidation. The Cytoplasmic segment spans residues 622 to 627 (DISPRS). A helical transmembrane segment spans residues 628-648 (LSGRIVGGVWWFFTLIIISSY). Residues 649–823 (TANLAAFLTV…DKTSALSLSN (175 aa)) lie on the Extracellular side of the membrane. Residues Ser686, Thr687, and Glu737 each contribute to the L-glutamate site. A disulfide bridge links Cys750 with Cys805. The helical transmembrane segment at 824-844 (VAGVFYILVGGLGLAMMVALI) threads the bilayer. Residues 845-894 (EFCYKSRAESKRMKLTKNTQNFKPAPATNTQNYATYREGYNVYGTESVKI) are Cytoplasmic-facing. Cys847 is lipidated: S-palmitoyl cysteine. A phosphotyrosine mark is found at Tyr877 and Tyr887.

The protein belongs to the glutamate-gated ion channel (TC 1.A.10.1) family. GRIA3 subfamily. In terms of assembly, homotetramer or heterotetramer of pore-forming glutamate receptor subunits. Tetramers may be formed by the dimerization of dimers. Interacts with PICK1, GRIP1 and GRIP2. Found in a complex with GRIA1, GRIA2, GRIA4, CNIH2, CNIH3, CACNG2, CACNG3, CACNG4, CACNG5, CACNG7 and CACNG8. Interacts with CACNG5. Found in a complex with GRIA1, GRIA2, GRIA4, DLG4, CACNG8 and CNIH2.

The protein localises to the cell membrane. It localises to the postsynaptic cell membrane. It is found in the postsynaptic density membrane. It carries out the reaction Ca(2+)(in) = Ca(2+)(out). Functionally, ionotropic glutamate receptor that functions as a ligand-gated cation channel, gated by L-glutamate and glutamatergic agonists such as alpha-amino-3-hydroxy-5-methyl-4-isoxazolepropionic acid (AMPA), quisqualic acid, and kainic acid. L-glutamate acts as an excitatory neurotransmitter at many synapses in the central nervous system and plays an important role in fast excitatory synaptic transmission by inducing long-term potentiation. Binding of the excitatory neurotransmitter L-glutamate induces a conformation change, leading to the opening of the cation channel, and thereby converts the chemical signal to an electrical impulse upon entry of calcium. The receptor then desensitizes rapidly and enters a transient inactive state, characterized by the presence of bound agonist. In the presence of CACNG8, shows resensitization which is characterized by a delayed accumulation of current flux upon continued application of glutamate. The protein is Glutamate receptor 3 of Homo sapiens (Human).